Consider the following 259-residue polypeptide: UPF0246 protein PLES_14941 (259 aa).

The protein belongs to the UPF0246 family.

In Pseudomonas aeruginosa (strain LESB58), this protein is UPF0246 protein PLES_14941.